Reading from the N-terminus, the 507-residue chain is MQYKDLRDFMSQLEQRGELKRVAAPVSPNLEMTEICDRLLRANGPAVLFEQPRRDNGDIYKVPVLANLFGTTQRVAQGMGASSLEDLRDIGRVLSVLKEPEPPRGLREAGKLFTLAKSVWDMAPKRVSSPACQEIVWEGNDVDLARLPIQTCWPGDAAPLITWGLVVTKGPHKKRQNLGIYRQQVISRNQVIMRWLAHRGGALDFREHALANPGKPFPIAVALGADPATILGAVTPVPDTLSEYQFAGLLRGSRTALASCITPTLSELSVPASAEIILEGHIQPDPNHPSGYQHALEGPYGDHTGYYNEQDWFPVFTIDRITMRRDPIYHSTYTGKPPDEPAVLGVALNEVFVPLLQKQFPEITDFYLPPEGCSYRMALVRMKKQYAGHAKRVMFGVWSFLRQFMYTKFIVVVDDDIDVRDWKEVIWAITTRVDPTRDTVMVDNTPIDYLDFASPVSGLGSKMGIDATDKWPGETTREWGTPITMAPEIKARVDQMWGSLFEEGPGK.

Residue asparagine 177 participates in Mn(2+) binding. Residues 180 to 182, 194 to 196, and 199 to 200 each bind prenylated FMN; these read IYR, RWL, and RG. Glutamate 243 lines the Mn(2+) pocket. The active-site Proton donor is the aspartate 302.

It belongs to the UbiD family. In terms of assembly, homohexamer. Prenylated FMN serves as cofactor. Mn(2+) is required as a cofactor.

It localises to the cell membrane. It catalyses the reaction a 4-hydroxy-3-(all-trans-polyprenyl)benzoate + H(+) = a 2-(all-trans-polyprenyl)phenol + CO2. The protein operates within cofactor biosynthesis; ubiquinone biosynthesis. Its function is as follows. Catalyzes the decarboxylation of 3-octaprenyl-4-hydroxy benzoate to 2-octaprenylphenol, an intermediate step in ubiquinone biosynthesis. The chain is 3-octaprenyl-4-hydroxybenzoate carboxy-lyase from Cupriavidus metallidurans (strain ATCC 43123 / DSM 2839 / NBRC 102507 / CH34) (Ralstonia metallidurans).